Consider the following 102-residue polypeptide: NADH-quinone oxidoreductase subunit K (102 aa).

3 helical membrane-spanning segments follow: residues 5-25, 31-51, and 62-82; these read LGHYLSLGAMLFALSVIGIFL, IVLLMAIELMLLAVNLNFVAF, and VFVFFILTVAAAESAIGLAIL.

This sequence belongs to the complex I subunit 4L family. NDH-1 is composed of 14 different subunits. Subunits NuoA, H, J, K, L, M, N constitute the membrane sector of the complex.

Its subcellular location is the cell inner membrane. It carries out the reaction a quinone + NADH + 5 H(+)(in) = a quinol + NAD(+) + 4 H(+)(out). Functionally, NDH-1 shuttles electrons from NADH, via FMN and iron-sulfur (Fe-S) centers, to quinones in the respiratory chain. The immediate electron acceptor for the enzyme in this species is believed to be ubiquinone. Couples the redox reaction to proton translocation (for every two electrons transferred, four hydrogen ions are translocated across the cytoplasmic membrane), and thus conserves the redox energy in a proton gradient. The chain is NADH-quinone oxidoreductase subunit K from Methylibium petroleiphilum (strain ATCC BAA-1232 / LMG 22953 / PM1).